The primary structure comprises 546 residues: Probable protein kinase UbiB (546 aa).

The 379-residue stretch at Asp124–Leu502 folds into the Protein kinase domain. ATP contacts are provided by residues Leu130–Val138 and Lys153. The active-site Proton acceptor is Asp288. The next 2 membrane-spanning stretches (helical) occupy residues Ser499 to Ser519 and Val521 to Gly541.

The protein belongs to the ABC1 family. UbiB subfamily.

It localises to the cell inner membrane. Its pathway is cofactor biosynthesis; ubiquinone biosynthesis [regulation]. Is probably a protein kinase regulator of UbiI activity which is involved in aerobic coenzyme Q (ubiquinone) biosynthesis. This Pectobacterium carotovorum subsp. carotovorum (strain PC1) protein is Probable protein kinase UbiB.